The chain runs to 162 residues: NADH-quinone oxidoreductase subunit I (162 aa).

4Fe-4S ferredoxin-type domains are found at residues 52-82 (LRRY…IEAG) and 93-122 (VRYD…EGPN). [4Fe-4S] cluster contacts are provided by C62, C65, C68, C72, C102, C105, C108, and C112.

It belongs to the complex I 23 kDa subunit family. NDH-1 is composed of 14 different subunits. Subunits NuoA, H, J, K, L, M, N constitute the membrane sector of the complex. It depends on [4Fe-4S] cluster as a cofactor.

It localises to the cell inner membrane. The enzyme catalyses a quinone + NADH + 5 H(+)(in) = a quinol + NAD(+) + 4 H(+)(out). NDH-1 shuttles electrons from NADH, via FMN and iron-sulfur (Fe-S) centers, to quinones in the respiratory chain. The immediate electron acceptor for the enzyme in this species is believed to be ubiquinone. Couples the redox reaction to proton translocation (for every two electrons transferred, four hydrogen ions are translocated across the cytoplasmic membrane), and thus conserves the redox energy in a proton gradient. This chain is NADH-quinone oxidoreductase subunit I, found in Bradyrhizobium sp. (strain BTAi1 / ATCC BAA-1182).